The sequence spans 95 residues: Protein Vpr (95 aa).

Positions 1 to 42 (MEQAPEDQGPQREPYNEWALELLEDLKNEALRHFPRPWLHGL) are homooligomerization. Phosphoserine; by host occurs at positions 79, 93, and 95.

It belongs to the HIV-1 VPR protein family. Homooligomer, may form homodimer. Interacts with p6-gag region of the Pr55 Gag precursor protein through a (Leu-X-X)4 motif near the C-terminus of the P6gag protein. Interacts with host UNG. May interact with host RAD23A/HHR23A. Interacts with host VPRBP/DCAF1, leading to hijack the CUL4A-RBX1-DDB1-DCAF1/VPRBP complex, mediating ubiquitination of host proteins such as TERT and ZGPAT and arrest of the cell cycle in G2 phase. Phosphorylated on several residues by host. These phosphorylations regulate VPR activity for the nuclear import of the HIV-1 pre-integration complex.

It is found in the virion. The protein resides in the host nucleus. It localises to the host extracellular space. In terms of biological role, during virus replication, may deplete host UNG protein, and incude G2-M cell cycle arrest. Acts by targeting specific host proteins for degradation by the 26S proteasome, through association with the cellular CUL4A-DDB1 E3 ligase complex by direct interaction with host VPRPB/DCAF-1. Cell cycle arrest reportedly occurs within hours of infection and is not blocked by antiviral agents, suggesting that it is initiated by the VPR carried into the virion. Additionally, VPR induces apoptosis in a cell cycle dependent manner suggesting that these two effects are mechanistically linked. Detected in the serum and cerebrospinal fluid of AIDS patient, VPR may also induce cell death to bystander cells. Functionally, during virus entry, plays a role in the transport of the viral pre-integration (PIC) complex to the host nucleus. This function is crucial for viral infection of non-dividing macrophages. May act directly at the nuclear pore complex, by binding nucleoporins phenylalanine-glycine (FG)-repeat regions. This Pan troglodytes (Chimpanzee) protein is Protein Vpr.